A 191-amino-acid polypeptide reads, in one-letter code: Threonylcarbamoyl-AMP synthase (191 aa).

A YrdC-like domain is found at 10–191 (PFRVRHAAAE…DGRSGAYLRR (182 aa)).

This sequence belongs to the SUA5 family. TsaC subfamily.

Its subcellular location is the cytoplasm. It catalyses the reaction L-threonine + hydrogencarbonate + ATP = L-threonylcarbamoyladenylate + diphosphate + H2O. Its function is as follows. Required for the formation of a threonylcarbamoyl group on adenosine at position 37 (t(6)A37) in tRNAs that read codons beginning with adenine. Catalyzes the conversion of L-threonine, HCO(3)(-)/CO(2) and ATP to give threonylcarbamoyl-AMP (TC-AMP) as the acyladenylate intermediate, with the release of diphosphate. This is Threonylcarbamoyl-AMP synthase from Halorhodospira halophila (strain DSM 244 / SL1) (Ectothiorhodospira halophila (strain DSM 244 / SL1)).